The sequence spans 515 residues: Bifunctional purine biosynthesis protein PurH (515 aa).

The MGS-like domain occupies 1–145 (MTKRALISVS…KNHASVTVVV (145 aa)).

Belongs to the PurH family.

The enzyme catalyses (6R)-10-formyltetrahydrofolate + 5-amino-1-(5-phospho-beta-D-ribosyl)imidazole-4-carboxamide = 5-formamido-1-(5-phospho-D-ribosyl)imidazole-4-carboxamide + (6S)-5,6,7,8-tetrahydrofolate. It carries out the reaction IMP + H2O = 5-formamido-1-(5-phospho-D-ribosyl)imidazole-4-carboxamide. It functions in the pathway purine metabolism; IMP biosynthesis via de novo pathway; 5-formamido-1-(5-phospho-D-ribosyl)imidazole-4-carboxamide from 5-amino-1-(5-phospho-D-ribosyl)imidazole-4-carboxamide (10-formyl THF route): step 1/1. The protein operates within purine metabolism; IMP biosynthesis via de novo pathway; IMP from 5-formamido-1-(5-phospho-D-ribosyl)imidazole-4-carboxamide: step 1/1. This is Bifunctional purine biosynthesis protein PurH from Streptococcus pyogenes serotype M18 (strain MGAS8232).